Consider the following 398-residue polypeptide: Acetate kinase (398 aa).

A Mg(2+)-binding site is contributed by Asn7. Position 14 (Lys14) interacts with ATP. Residue Arg91 participates in substrate binding. Residue Asp148 is the Proton donor/acceptor of the active site. Residues His208–Gly212, Asp283–Arg285, and Gly331–Asn335 contribute to the ATP site. Glu385 is a binding site for Mg(2+).

The protein belongs to the acetokinase family. Homodimer. Mg(2+) is required as a cofactor. Requires Mn(2+) as cofactor.

It is found in the cytoplasm. The enzyme catalyses acetate + ATP = acetyl phosphate + ADP. The protein operates within metabolic intermediate biosynthesis; acetyl-CoA biosynthesis; acetyl-CoA from acetate: step 1/2. Catalyzes the formation of acetyl phosphate from acetate and ATP. Can also catalyze the reverse reaction. In Porphyromonas gingivalis (strain ATCC BAA-308 / W83), this protein is Acetate kinase.